Consider the following 134-residue polypeptide: Small ribosomal subunit protein bS16 (134 aa).

Residues 79–134 (AGIAKRPSRNNPTKGEPGKKAQERLALAKQAEEEAAAKAAEAAAAAAAPAEEAASE) are disordered. The segment covering 115–134 (AKAAEAAAAAAAPAEEAASE) has biased composition (low complexity).

Belongs to the bacterial ribosomal protein bS16 family.

The protein is Small ribosomal subunit protein bS16 of Brucella canis (strain ATCC 23365 / NCTC 10854 / RM-666).